The sequence spans 160 residues: Cytochrome b6-f complex subunit 4 (160 aa).

The next 3 membrane-spanning stretches (helical) occupy residues Leu-36 to Val-56, Leu-95 to Glu-115, and Thr-131 to Ile-151.

This sequence belongs to the cytochrome b family. PetD subfamily. As to quaternary structure, the 4 large subunits of the cytochrome b6-f complex are cytochrome b6, subunit IV (17 kDa polypeptide, petD), cytochrome f and the Rieske protein, while the 4 small subunits are petG, petL, petM and petN. The complex functions as a dimer.

Its subcellular location is the plastid. The protein localises to the chloroplast thylakoid membrane. Functionally, component of the cytochrome b6-f complex, which mediates electron transfer between photosystem II (PSII) and photosystem I (PSI), cyclic electron flow around PSI, and state transitions. This chain is Cytochrome b6-f complex subunit 4, found in Solanum tuberosum (Potato).